The primary structure comprises 59 residues: Alpha-conotoxin CIA (59 aa).

The N-terminal stretch at 1-16 (MFTVFLLVVLTITVVS) is a signal peptide. Residues 17–42 (FPSDRASDGRDDEAKDERSDMYKSKR) constitute a propeptide that is removed on maturation. Disulfide bonds link C46–C51 and C47–C57. Cysteine amide is present on C57.

Belongs to the conotoxin A superfamily. As to expression, expressed by the venom duct.

Its subcellular location is the secreted. Functionally, alpha-conotoxins act on postsynaptic membranes, they bind to the nicotinic acetylcholine receptors (nAChR) and thus inhibit them. This toxin blocks the rat muscle nAChRs alpha-1-beta-1-gamma-delta (CHRNA1-CHRNB1-CHRNG-CHRND) (IC(50)=5.7 nM) and the rat neuronal nAChR alpha-3-beta-2/CHRNA3-CHRNB2 (IC(50)=2060 nM). In vivo, intramuscular injection into zebrafish produces rapid flaccid paralysis. This Conus catus (Cat cone) protein is Alpha-conotoxin CIA.